Reading from the N-terminus, the 493-residue chain is MEEMGSILEFLDNKAILVTGATGSLAKIFVEKVLRSQPNVKKLYLLLRATDDETAALRLQNEVFGKELFKVLKQNLGANFYSFVSEKVTVVPGDITGEDLCLKDVNLKEEMWREIDVVVNLAATINFIERYDVSLLINTYGAKYVLDFAKKCNKLKIFVHVSTAYVSGEKNGLILEKPYYMGESLNGRLGLDINVEKKLVEAKINELQAAGATEKSIKSTMKDMGIERARHWGWPNVYVFTKALGEMLLMQYKGDIPLTIIRPTIITSTFKEPFPGWVEGVRTIDNVPVYYGKGRLRCMLCGPSTIIDLIPADMVVNATIVAMVAHANQRYVEPVTYHVGSSAANPMKLSALPEMAHRYFTKNPWINPDRNPVHVGRAMVFSSFSTFHLYLTLNFLLPLKVLEIANTIFCQWFKGKYMDLKRKTRLLLRLVDIYKPYLFFQGIFDDMNTEKLRIAAKESIVEADMFYFDPRAINWEDYFLKTHFPGVVEHVLN.

It belongs to the fatty acyl-CoA reductase family.

It catalyses the reaction a long-chain fatty acyl-CoA + 2 NADPH + 2 H(+) = a long-chain primary fatty alcohol + 2 NADP(+) + CoA. NADPH-dependent alcohol-forming fatty acyl-coenzyme A reductase that catalyzes the reduction of fatty acyl-CoA to fatty alcohols. The recombinant enzyme accepts saturated and mono-unsaturated fatty acyl-CoAs of 16 to 22 carbons. The protein is Alcohol-forming fatty acyl-CoA reductase of Simmondsia chinensis (Jojoba).